Consider the following 188-residue polypeptide: dCTP deaminase (188 aa).

DCTP is bound by residues Lys111–Arg116, Thr135–Glu137, Gln156, Tyr170, and Gln180. The active-site Proton donor/acceptor is the Glu137.

It belongs to the dCTP deaminase family. In terms of assembly, homotrimer.

The catalysed reaction is dCTP + H2O + H(+) = dUTP + NH4(+). Its pathway is pyrimidine metabolism; dUMP biosynthesis; dUMP from dCTP (dUTP route): step 1/2. Functionally, catalyzes the deamination of dCTP to dUTP. This chain is dCTP deaminase, found in Legionella pneumophila (strain Paris).